The primary structure comprises 285 residues: Transmembrane protein 53-A (285 aa).

A helical transmembrane segment spans residues 165 to 185 (FLALAAFAILVIILRILLYPL).

It belongs to the TMEM53 family.

It localises to the nucleus outer membrane. Ensures normal bone formation, through the negative regulation of bone morphogenetic protein (BMP) signaling in osteoblast lineage cells by blocking cytoplasm-nucleus translocation of phosphorylated SMAD proteins. The protein is Transmembrane protein 53-A (tmem53-a) of Xenopus laevis (African clawed frog).